The following is a 421-amino-acid chain: UDP-N-acetylglucosamine 1-carboxyvinyltransferase (421 aa).

22-23 lines the phosphoenolpyruvate pocket; sequence KN. R91 contributes to the UDP-N-acetyl-alpha-D-glucosamine binding site. The active-site Proton donor is C115. The residue at position 115 (C115) is a 2-(S-cysteinyl)pyruvic acid O-phosphothioketal. UDP-N-acetyl-alpha-D-glucosamine is bound by residues 120–124, D306, and I328; that span reads RPIDL.

The protein belongs to the EPSP synthase family. MurA subfamily.

The protein localises to the cytoplasm. It carries out the reaction phosphoenolpyruvate + UDP-N-acetyl-alpha-D-glucosamine = UDP-N-acetyl-3-O-(1-carboxyvinyl)-alpha-D-glucosamine + phosphate. Its pathway is cell wall biogenesis; peptidoglycan biosynthesis. Functionally, cell wall formation. Adds enolpyruvyl to UDP-N-acetylglucosamine. The polypeptide is UDP-N-acetylglucosamine 1-carboxyvinyltransferase (Methylacidiphilum infernorum (isolate V4) (Methylokorus infernorum (strain V4))).